An 879-amino-acid chain; its full sequence is Metabotropic glutamate receptor 3 (879 aa).

The signal sequence occupies residues 1-22; that stretch reads MKMLTRLQVLTLALFSKGFLLS. The Extracellular segment spans residues 23 to 576; it reads LGDHNFLRRE…EDYIRWEDAW (554 aa). A disulfide bridge connects residues C57 and C99. L-glutamate is bound by residues S151 and 172 to 174; that span reads AST. N-linked (GlcNAc...) asparagine glycosylation occurs at N209. Y222 lines the L-glutamate pocket. Cystine bridges form between C240–C527, C361–C373, C412–C419, C509–C528, C513–C531, C534–C546, and C549–C562. Residue N292 is glycosylated (N-linked (GlcNAc...) asparagine). Position 301 (D301) interacts with L-glutamate. K389 provides a ligand contact to L-glutamate. N-linked (GlcNAc...) asparagine glycosylation is found at N414 and N439. Residues 577–599 traverse the membrane as a helical segment; that stretch reads VIGPVTIACLGFMCTCMVVTVFI. Residues 600–613 are Cytoplasmic-facing; the sequence is KHNNTPLVKASGRE. Residues 614-634 form a helical membrane-spanning segment; that stretch reads LCYILLFGVGLSYCMTFFFIA. Residues 635-645 lie on the Extracellular side of the membrane; sequence KPSPVICALRR. The helical transmembrane segment at 646–664 threads the bilayer; the sequence is LGLGSSFAICYSALLTKTN. Topologically, residues 665 to 688 are cytoplasmic; the sequence is CIARIFDGVKNGAQRPKFISPSSQ. Residues 689-709 traverse the membrane as a helical segment; that stretch reads VFICLGLILVQIVMVSVWLIL. Residues 710–734 lie on the Extracellular side of the membrane; it reads EAPGTRRYTLAEKRETVILKCNVKD. The chain crosses the membrane as a helical span at residues 735–756; that stretch reads SSMLISLTYDVILVILCTVYAF. The Cytoplasmic portion of the chain corresponds to 757–769; that stretch reads KTRKCPENFNEAK. The helical transmembrane segment at 770 to 792 threads the bilayer; it reads FIGFTMYTTCIIWLAFLPIFYVT. The Extracellular segment spans residues 793-802; the sequence is SSDYRVQTTT. A helical transmembrane segment spans residues 803–828; it reads MCISVSLSGFVVLGCLFAPKVHIILF. The Cytoplasmic segment spans residues 829–879; that stretch reads QPQKNVVTHRLHLNRFSVSGTGTTYSQSSASTYVPTVCNGREVLDSTTSSL.

Belongs to the G-protein coupled receptor 3 family. In terms of assembly, interacts with TAMALIN.

The protein resides in the cell membrane. Functionally, G-protein coupled receptor for glutamate. Ligand binding causes a conformation change that triggers signaling via guanine nucleotide-binding proteins (G proteins) and modulates the activity of down-stream effectors. Signaling inhibits adenylate cyclase activity. This Pongo abelii (Sumatran orangutan) protein is Metabotropic glutamate receptor 3 (GRM3).